Here is a 651-residue protein sequence, read N- to C-terminus: Acetyl-coenzyme A synthetase (651 aa).

CoA-binding positions include 190-193 and threonine 311; that span reads RRGK. Residues 387–389, 411–416, aspartate 508, and arginine 523 each bind ATP; these read GEP and DTWWQT. Serine 531 contacts CoA. An ATP-binding site is contributed by arginine 534. Mg(2+) is bound by residues valine 545, histidine 547, and valine 550. Position 617 is an N6-acetyllysine (lysine 617).

This sequence belongs to the ATP-dependent AMP-binding enzyme family. It depends on Mg(2+) as a cofactor. In terms of processing, acetylated. Deacetylation by the SIR2-homolog deacetylase activates the enzyme.

It catalyses the reaction acetate + ATP + CoA = acetyl-CoA + AMP + diphosphate. In terms of biological role, catalyzes the conversion of acetate into acetyl-CoA (AcCoA), an essential intermediate at the junction of anabolic and catabolic pathways. AcsA undergoes a two-step reaction. In the first half reaction, AcsA combines acetate with ATP to form acetyl-adenylate (AcAMP) intermediate. In the second half reaction, it can then transfer the acetyl group from AcAMP to the sulfhydryl group of CoA, forming the product AcCoA. This chain is Acetyl-coenzyme A synthetase, found in Mycobacterium bovis (strain ATCC BAA-935 / AF2122/97).